The following is a 138-amino-acid chain: Translation initiation factor IF-1, chloroplastic (138 aa).

Residues 1-53 (MFTSLHTPILHPRYCHHPTPSCTQFSPLALPPFHRTLSFLAPPPLLPAAPALS) constitute a chloroplast transit peptide. The region spanning 58-133 (AKPDKSGEQK…SKGRIVYRLR (76 aa)) is the S1-like domain.

Belongs to the IF-1 family. In terms of assembly, component of the 30S ribosomal translation pre-initiation complex which assembles on the 30S ribosome in the order IF-2 and IF-3, IF-1 and N-formylmethionyl-tRNA(fMet); mRNA recruitment can occur at any time during PIC assembly.

The protein resides in the plastid. It localises to the chloroplast. In terms of biological role, one of the essential components for the initiation of protein synthesis. Stabilizes the binding of IF-2 and IF-3 on the 30S subunit to which N-formylmethionyl-tRNA(fMet) subsequently binds. Helps modulate mRNA selection, yielding the 30S pre-initiation complex (PIC). Upon addition of the 50S ribosomal subunit IF-1, IF-2 and IF-3 are released leaving the mature 70S translation initiation complex. The polypeptide is Translation initiation factor IF-1, chloroplastic (infA) (Glycine max (Soybean)).